We begin with the raw amino-acid sequence, 229 residues long: C-&gt;U-editing enzyme APOBEC-1 (229 aa).

The 125-residue stretch at 10-134 folds into the CMP/dCMP-type deaminase domain; the sequence is VDPTLRRRIE…QRNRQGLRDL (125 aa). Histidine 61 is a Zn(2+) binding site. Glutamate 63 acts as the Proton donor in catalysis. Residues cysteine 93 and cysteine 96 each contribute to the Zn(2+) site.

Belongs to the cytidine and deoxycytidylate deaminase family. As to quaternary structure, homodimer. Interacts with A1CF; form an mRNA editing complex. Interacts with RBM47; form an mRNA editing complex. Found in a complex with CELF2/CUGBP2 and A1CF. Interacts with HNRPAB. Interacts with SYNCRIP. Requires Zn(2+) as cofactor.

Its subcellular location is the cytoplasm. The protein resides in the nucleus. The enzyme catalyses a cytidine in mRNA + H2O + H(+) = a uridine in mRNA + NH4(+). It carries out the reaction cytidine(6666) in apoB mRNA + H2O + H(+) = uridine(6666) in apoB mRNA + NH4(+). Functionally, cytidine deaminase catalyzing the cytidine to uridine postranscriptional editing of a variety of mRNAs. Form complexes with cofactors that confer differential editing activity and selectivity. Responsible for the postranscriptional editing of a CAA codon for Gln to a UAA codon for stop in the apolipoprotein B mRNA. Also involved in CGA (Arg) to UGA (Stop) editing in the NF1 mRNA. May also play a role in the epigenetic regulation of gene expression by participating in DNA demethylation. This Mesocricetus auratus (Golden hamster) protein is C-&gt;U-editing enzyme APOBEC-1.